A 588-amino-acid chain; its full sequence is MKLPVREFDAVVIGAGGAGMRAALQISQSGQTCALLSKVFPTRSHTVSAQGGITVALGNTHEDNWEWHMYDTVKGSDYIGDQDAIEYMCKTGPEAILELEHMGLPFSRLDDGRIYQRPFGGQSKNFGGEQAARTAAAADRTGHALLHTLYQQNLKNHTTIFSEWYALDLVKNQDGAVVGCTALCIETGEVVYFKARATVLATGGAGRIYQSTTNAHINTGDGVGMALRAGVPVQDMEMWQFHPTGIAGAGVLVTEGCRGEGGYLLNKHGERFMERYAPNAKDLAGRDVVARSIMIEIREGRGCDGPWGPHAKLKLDHLGKEVLESRLPGILELSRTFAHVDPVKEPIPVIPTCHYMMGGIPTKVTGQALTVNEQGEDVVIPGLFAVGEIACVSVHGANRLGGNSLLDLVVFGRAAGLHLQESIAEQGVLRDASESDVEGSLERLNRWNNNRNGEDPVAIRKALQECMQHNFSVFREGDAMAKGLEQLKVIRERLKNARLDDTSSEFNTQRVECLELDNLMETAYATAVSANFRTESRGAHSRFDFPERDDANWLCHTLYQPQTESMTRRSVNMEPKLRPAFPPKIRTY.

FAD-binding positions include 14–19 (GAGGAG), 37–52 (SKVF…AQGG), and Asp-221. The residue at position 45 (His-45) is a Tele-8alpha-FAD histidine. Positions 242 and 254 each coordinate substrate. Catalysis depends on Arg-286, which acts as the Proton acceptor. His-354 serves as a coordination point for substrate. Glu-388 provides a ligand contact to FAD. Position 399 (Arg-399) interacts with substrate. An FAD-binding site is contributed by 404 to 405 (SL).

Belongs to the FAD-dependent oxidoreductase 2 family. FRD/SDH subfamily. In terms of assembly, part of an enzyme complex containing four subunits: a flavoprotein, an iron-sulfur, cytochrome b-556, and a hydrophobic anchor protein. FAD serves as cofactor.

It is found in the cell inner membrane. The enzyme catalyses a quinone + succinate = fumarate + a quinol. The protein operates within carbohydrate metabolism; tricarboxylic acid cycle; fumarate from succinate (bacterial route): step 1/1. Its function is as follows. Two distinct, membrane-bound, FAD-containing enzymes are responsible for the catalysis of fumarate and succinate interconversion; the fumarate reductase is used in anaerobic growth, and the succinate dehydrogenase is used in aerobic growth. In Salmonella typhimurium (strain LT2 / SGSC1412 / ATCC 700720), this protein is Succinate dehydrogenase flavoprotein subunit (sdhA).